Consider the following 236-residue polypeptide: Acetate--CoA ligase [ADP-forming] II subunit beta (236 aa).

In terms of domain architecture, ATP-grasp spans 26-62 (KQVLKAYGLPVPEEKLAKTLDEALKYAEEIGYPVAMK). Residue 52–63 (AEEIGYPVAMKL) participates in ATP binding.

This sequence belongs to the acetate CoA ligase beta subunit family. Heterotetramer of two alpha and two beta subunits.

The enzyme catalyses acetate + ATP + CoA = acetyl-CoA + ADP + phosphate. Functionally, catalyzes the reversible formation of acetate and ATP from acetyl-CoA by using ADP and phosphate. Can use other substrates such as phenylacetyl-CoA, indoleacetyl-CoA and isobutyryl-CoA, but not succinyl-CoA. Seems to be involved primarily in the degradation of aryl-CoA esters to the corresponding acids. Participates in the conversion of acetyl-CoA to acetate and in the degradation of branched-chain amino acids via branched-chain-acyl-CoA esters. This chain is Acetate--CoA ligase [ADP-forming] II subunit beta, found in Pyrococcus furiosus (strain ATCC 43587 / DSM 3638 / JCM 8422 / Vc1).